The following is a 78-amino-acid chain: Large ribosomal subunit protein bL28 (78 aa).

The tract at residues 1–28 (MSRRCQVRGTKPEFGNNVSHSQRHTKRR) is disordered.

The protein belongs to the bacterial ribosomal protein bL28 family.

This Cutibacterium acnes (strain DSM 16379 / KPA171202) (Propionibacterium acnes) protein is Large ribosomal subunit protein bL28.